The sequence spans 255 residues: 5'-nucleotidase SurE (255 aa).

Residues D16, D17, S47, and N100 each coordinate a divalent metal cation.

Belongs to the SurE nucleotidase family. Requires a divalent metal cation as cofactor.

It is found in the cytoplasm. The enzyme catalyses a ribonucleoside 5'-phosphate + H2O = a ribonucleoside + phosphate. Its function is as follows. Nucleotidase that shows phosphatase activity on nucleoside 5'-monophosphates. The chain is 5'-nucleotidase SurE from Vibrio vulnificus (strain CMCP6).